The following is a 339-amino-acid chain: Methionine synthase (339 aa).

Residues histidine 212, cysteine 214, and cysteine 295 each contribute to the Zn(2+) site.

It belongs to the archaeal MetE family. Zn(2+) serves as cofactor.

It functions in the pathway amino-acid biosynthesis; L-methionine biosynthesis via de novo pathway. Functionally, catalyzes the transfer of a methyl group to L-homocysteine resulting in methionine formation. The physiological methyl donor is unknown. The sequence is that of Methionine synthase from Sulfolobus acidocaldarius (strain ATCC 33909 / DSM 639 / JCM 8929 / NBRC 15157 / NCIMB 11770).